A 156-amino-acid chain; its full sequence is Small ribosomal subunit protein uS7 (156 aa).

The protein belongs to the universal ribosomal protein uS7 family. Part of the 30S ribosomal subunit. Contacts proteins S9 and S11.

Its function is as follows. One of the primary rRNA binding proteins, it binds directly to 16S rRNA where it nucleates assembly of the head domain of the 30S subunit. Is located at the subunit interface close to the decoding center, probably blocks exit of the E-site tRNA. This is Small ribosomal subunit protein uS7 from Dictyoglomus thermophilum (strain ATCC 35947 / DSM 3960 / H-6-12).